We begin with the raw amino-acid sequence, 858 residues long: Rho GTPase-activating protein 17 (858 aa).

Positions Gln-14 to Glu-246 constitute a BAR domain. Positions Thr-252–Phe-442 constitute a Rho-GAP domain. The span at Thr-459 to Gly-475 shows a compositional bias: polar residues. Residues Thr-459–Pro-482 form a disordered region. Residue Ser-484 is modified to Phosphoserine. The disordered stretch occupies residues Arg-516 to Glu-823. The span at Pro-543 to Asn-552 shows a compositional bias: polar residues. A compositionally biased stretch (low complexity) spans Ser-553–Gly-563. Ser-575 is modified (phosphoserine). Residues Arg-592–Thr-617 show a composition bias toward polar residues. Over residues Ala-637 to His-650 the composition is skewed to pro residues. Residues Gly-653–Gln-702 are compositionally biased toward low complexity. A phosphoserine mark is found at Ser-710 and Ser-712. Composition is skewed to pro residues over residues Ile-716–Gln-729 and Glu-738–Ala-756. 3 positions are modified to phosphothreonine: Thr-742, Thr-746, and Thr-748. Positions Thr-742–Pro-755 match the SH3-binding motif. Position 751 is a phosphoserine (Ser-751). Residue Thr-752 is modified to Phosphothreonine. Residues Lys-757–His-769 show a composition bias toward polar residues. Residues Arg-784 to Pro-794 are compositionally biased toward pro residues. The span at Ser-806–Glu-823 shows a compositional bias: polar residues.

Component of a complex whose core is composed of ARHGAP17, AMOT, PALS1, PATJ and PARD3/PAR3. Interacts with NHERF1, FNBP1, TRIP10, CAPZA (CAPZA1, CAPZA2 or CAPZA3), CAPZB, CD2AP and SH3KBP1/CIN85. As to expression, highly expressed in brain; neuron-specific (at protein level). Isoform 2, isoform 3 and isoform 4 are predominantly expressed in neuronal tissues and correlate well with the differentiation of neurons, while isoform 1 is strongly expressed in embryonic brain.

It is found in the membrane. The protein resides in the cytoplasm. It localises to the cell junction. Its subcellular location is the tight junction. Functionally, rho GTPase-activating protein involved in the maintenance of tight junction by regulating the activity of CDC42, thereby playing a central role in apical polarity of epithelial cells. Specifically acts as a GTPase activator for the CDC42 GTPase by converting it to an inactive GDP-bound state. The complex formed with AMOT acts by regulating the uptake of polarity proteins at tight junctions, possibly by deciding whether tight junction transmembrane proteins are recycled back to the plasma membrane or sent elsewhere. Participates in the Ca(2+)-dependent regulation of exocytosis, possibly by catalyzing GTPase activity of Rho family proteins and by inducing the reorganization of the cortical actin filaments. Acts as a GTPase activator in vitro for RAC1. The protein is Rho GTPase-activating protein 17 (Arhgap17) of Rattus norvegicus (Rat).